Consider the following 673-residue polypeptide: DNA ligase (673 aa).

NAD(+) contacts are provided by residues Asp32–Asp36, Ser81–Leu82, and Glu111. Residue Lys113 is the N6-AMP-lysine intermediate of the active site. Residues Arg134, Glu171, Lys286, and Lys310 each coordinate NAD(+). The Zn(2+) site is built by Cys404, Cys407, Cys422, and Cys428. Residues Asn595 to Phe673 enclose the BRCT domain.

The protein belongs to the NAD-dependent DNA ligase family. LigA subfamily. Requires Mg(2+) as cofactor. Mn(2+) serves as cofactor.

It carries out the reaction NAD(+) + (deoxyribonucleotide)n-3'-hydroxyl + 5'-phospho-(deoxyribonucleotide)m = (deoxyribonucleotide)n+m + AMP + beta-nicotinamide D-nucleotide.. Its function is as follows. DNA ligase that catalyzes the formation of phosphodiester linkages between 5'-phosphoryl and 3'-hydroxyl groups in double-stranded DNA using NAD as a coenzyme and as the energy source for the reaction. It is essential for DNA replication and repair of damaged DNA. The chain is DNA ligase from Ureaplasma urealyticum serovar 10 (strain ATCC 33699 / Western).